Consider the following 380-residue polypeptide: MAPNIRKSHPLLKMINNSLIDLPSPSNISAWWNFGSLLGICLMTQILTGLLLATHYTADTTLAFSSVAHTCRNVQYGWLIRNLHANGASFFFICIYLHIGRGFYYGSYLYKETWNTGVILLLTLMATAFVGYVLPWGQMSFWGATVITNLFSAIPYIGQTLVEWAWGGFSVDNPTLTRFFALHFLLPFMIAGLTTIHLTFLHESGSNNPLGITSNCDKIPFHPYFTLKDILGFTLMLLPLTILALFSPNLLGDPENFTPANPLITPPHIKPEWYFLFAYAILRSIPNKLGGVLALAASVLILFLTPFLHKAKQRTMTFRPISQLLFWILVTNLLILTWVGSQPVEHPFIIIGQLASITYFTILLILFPITGALENKMLNY.

4 helical membrane-spanning segments follow: residues 34 to 54, 78 to 99, 114 to 134, and 179 to 199; these read FGSL…LLAT, WLIR…YLHI, WNTG…GYVL, and FFAL…IHLT. Residues histidine 84 and histidine 98 each coordinate heme b. Residues histidine 183 and histidine 197 each contribute to the heme b site. Histidine 202 lines the a ubiquinone pocket. 4 helical membrane passes run 227 to 247, 289 to 309, 321 to 341, and 348 to 368; these read LKDI…ALFS, LGGV…PFLH, ISQL…WVGS, and FIII…ILFP.

It belongs to the cytochrome b family. The cytochrome bc1 complex contains 11 subunits: 3 respiratory subunits (MT-CYB, CYC1 and UQCRFS1), 2 core proteins (UQCRC1 and UQCRC2) and 6 low-molecular weight proteins (UQCRH/QCR6, UQCRB/QCR7, UQCRQ/QCR8, UQCR10/QCR9, UQCR11/QCR10 and a cleavage product of UQCRFS1). This cytochrome bc1 complex then forms a dimer. Requires heme b as cofactor.

It localises to the mitochondrion inner membrane. In terms of biological role, component of the ubiquinol-cytochrome c reductase complex (complex III or cytochrome b-c1 complex) that is part of the mitochondrial respiratory chain. The b-c1 complex mediates electron transfer from ubiquinol to cytochrome c. Contributes to the generation of a proton gradient across the mitochondrial membrane that is then used for ATP synthesis. This chain is Cytochrome b (MT-CYB), found in Pelecanoides magellani (Magellanic diving petrel).